The following is a 68-amino-acid chain: Putative membrane protein insertion efficiency factor (68 aa).

Belongs to the UPF0161 family.

Its subcellular location is the cell membrane. Functionally, could be involved in insertion of integral membrane proteins into the membrane. The polypeptide is Putative membrane protein insertion efficiency factor (Herpetosiphon aurantiacus (strain ATCC 23779 / DSM 785 / 114-95)).